Reading from the N-terminus, the 149-residue chain is D-aminoacyl-tRNA deacylase (149 aa).

Residues 137 to 138 (GP) carry the Gly-cisPro motif, important for rejection of L-amino acids motif.

It belongs to the DTD family. Homodimer.

Its subcellular location is the cytoplasm. It catalyses the reaction glycyl-tRNA(Ala) + H2O = tRNA(Ala) + glycine + H(+). The enzyme catalyses a D-aminoacyl-tRNA + H2O = a tRNA + a D-alpha-amino acid + H(+). In terms of biological role, an aminoacyl-tRNA editing enzyme that deacylates mischarged D-aminoacyl-tRNAs. Also deacylates mischarged glycyl-tRNA(Ala), protecting cells against glycine mischarging by AlaRS. Acts via tRNA-based rather than protein-based catalysis; rejects L-amino acids rather than detecting D-amino acids in the active site. By recycling D-aminoacyl-tRNA to D-amino acids and free tRNA molecules, this enzyme counteracts the toxicity associated with the formation of D-aminoacyl-tRNA entities in vivo and helps enforce protein L-homochirality. The protein is D-aminoacyl-tRNA deacylase of Desulforudis audaxviator (strain MP104C).